Consider the following 509-residue polypeptide: Maturase K (509 aa).

It belongs to the intron maturase 2 family. MatK subfamily.

It is found in the plastid. Its subcellular location is the chloroplast. Functionally, usually encoded in the trnK tRNA gene intron. Probably assists in splicing its own and other chloroplast group II introns. The polypeptide is Maturase K (Galbulimima belgraveana (Northern pigeonberry ash)).